The chain runs to 299 residues: Acarbose 7(IV)-phosphotransferase (299 aa).

This sequence belongs to the carbohydrate kinase PfkB family.

It catalyses the reaction acarbose + ATP = acarbose 7(IV)-phosphate + ADP + H(+). In terms of biological role, catalyzes the phosphorylation of the alpha-glucosidase inhibitor acarbose. Phosphorylation of acarbose could be a resistance-like self-protection mechanism. This is Acarbose 7(IV)-phosphotransferase from Actinoplanes sp. (strain ATCC 31044 / CBS 674.73 / SE50/110).